Here is a 276-residue protein sequence, read N- to C-terminus: uncharacterized protein (276 aa).

7 helical membrane-spanning segments follow: residues 5–25 (TDLI…GMLA), 32–52 (PLVG…GFVG), 64–84 (GVIL…LLAV), 104–124 (AGLA…GLAL), 149–169 (IAVG…VLLP), 193–213 (LWVT…VMLV), and 244–264 (VGIA…GAFF).

Belongs to the monovalent cation:proton antiporter 2 (CPA2) transporter (TC 2.A.37) family.

The protein localises to the cell membrane. This is an uncharacterized protein from Methylorubrum extorquens (Methylobacterium dichloromethanicum).